The primary structure comprises 482 residues: tRNA sulfurtransferase (482 aa).

The region spanning 61–165 is the THUMP domain; that stretch reads LVIRDALTRI…DDRLLLIKGR (105 aa). ATP contacts are provided by residues 183–184, lysine 265, glycine 287, and glutamine 296; that span reads LI. A disulfide bond links cysteine 344 and cysteine 456. The Rhodanese domain occupies 404–482; it reads FGPNDVILDI…GFANVKVYRP (79 aa). Residue cysteine 456 is the Cysteine persulfide intermediate of the active site.

This sequence belongs to the ThiI family.

The protein resides in the cytoplasm. It catalyses the reaction [ThiI sulfur-carrier protein]-S-sulfanyl-L-cysteine + a uridine in tRNA + 2 reduced [2Fe-2S]-[ferredoxin] + ATP + H(+) = [ThiI sulfur-carrier protein]-L-cysteine + a 4-thiouridine in tRNA + 2 oxidized [2Fe-2S]-[ferredoxin] + AMP + diphosphate. It carries out the reaction [ThiS sulfur-carrier protein]-C-terminal Gly-Gly-AMP + S-sulfanyl-L-cysteinyl-[cysteine desulfurase] + AH2 = [ThiS sulfur-carrier protein]-C-terminal-Gly-aminoethanethioate + L-cysteinyl-[cysteine desulfurase] + A + AMP + 2 H(+). It participates in cofactor biosynthesis; thiamine diphosphate biosynthesis. Functionally, catalyzes the ATP-dependent transfer of a sulfur to tRNA to produce 4-thiouridine in position 8 of tRNAs, which functions as a near-UV photosensor. Also catalyzes the transfer of sulfur to the sulfur carrier protein ThiS, forming ThiS-thiocarboxylate. This is a step in the synthesis of thiazole, in the thiamine biosynthesis pathway. The sulfur is donated as persulfide by IscS. This Salmonella typhimurium (strain LT2 / SGSC1412 / ATCC 700720) protein is tRNA sulfurtransferase.